The primary structure comprises 332 residues: 2,3-diketo-L-gulonate reductase (332 aa).

Histidine 44 acts as the Proton donor in catalysis. Residues 168 to 174 (ITMVDMS), 224 to 225 (WK), and 304 to 306 (GHE) each bind NAD(+).

It belongs to the LDH2/MDH2 oxidoreductase family. DlgD subfamily. As to quaternary structure, homodimer.

The protein localises to the cytoplasm. It catalyses the reaction 3-dehydro-L-gulonate + NAD(+) = 2,3-dioxo-L-gulonate + NADH + H(+). The catalysed reaction is 3-dehydro-L-gulonate + NADP(+) = 2,3-dioxo-L-gulonate + NADPH + H(+). In terms of biological role, catalyzes the reduction of 2,3-diketo-L-gulonate in the presence of NADH, to form 3-keto-L-gulonate. This chain is 2,3-diketo-L-gulonate reductase, found in Escherichia coli O139:H28 (strain E24377A / ETEC).